The primary structure comprises 498 residues: MELLQLWSALIILVVTYTISLLINQWRKPKPQGKFPPGPPKLPLIGHLHLLWGKLPQHALASVAKEYGPVAHVQLGEVFSVVLSSREATKEAMKLVDPACANRFESIGTRIMWYDNEDIIFSPYSEHWRQMRKICVSELLSSRNVRSFGFIRQDEVSRLLRHLRSSAGAAVDMTERIETLTCSIICRAAFGSVIRDNAELVGLVKDALSMASGFELADMFPSSKLLNLLCWNKSKLWRMRRRVDTILEAIVDEHKFKKSGEFGGEDIIDVLFRMQKDTQIKVPITTNSIKAFIFDTFSAGTETSSTTTLWVLAELMRNPAVMAKAQAEVRAALKEKTNWDVDDVQELKYMKSVVKETMRMHPPIPLIPRSCREECVVNGYTIPNKARIMINVWSMGRNPLYWEKPDTFWPERFDQVSKDFMGNDFEFVPFGAGRRICPGLNFGLANVEVPLAQLLYHFDWKLAEGMKPSDMDMSEAEGLTGILKNNLLLVPTPYDPSS.

The chain crosses the membrane as a helical; Signal-anchor for type II membrane protein span at residues Leu3–Ile23. Cys437 serves as a coordination point for heme.

This sequence belongs to the cytochrome P450 family. It depends on heme as a cofactor.

Its subcellular location is the endoplasmic reticulum membrane. The catalysed reaction is (4S)-limonene + reduced [NADPH--hemoprotein reductase] + O2 = (1S,6R)-isopiperitenol + oxidized [NADPH--hemoprotein reductase] + H2O + H(+). Hydroxylates (-)-(4S)-limonene to (-)-trans-isopiperitenol, a precursor of (-)-menthol, responsible for the cooling sensation of peppermint. Fluorinated substrate analogs are hydroxylated with the same regio- and stereochemistry. The chain is Cytochrome P450 71D15 (CYP71D15) from Mentha piperita (Peppermint).